A 780-amino-acid chain; its full sequence is Replication origin-binding protein (780 aa).

In terms of domain architecture, Helicase ATP-binding spans 39–195; sequence SFENVRQPIK…AAFKPDTQIA (157 aa). ATP is bound at residue 52-59; sequence AAMGSGKT.

This sequence belongs to the herpesviridae OriBP family.

Its function is as follows. Probably involved in DNA replication. Binds the origin of replication (ori). The sequence is that of Replication origin-binding protein (U73) from Human herpesvirus 6A (strain Uganda-1102) (HHV-6 variant A).